A 259-amino-acid polypeptide reads, in one-letter code: Ribosomal RNA small subunit methyltransferase J (259 aa).

S-adenosyl-L-methionine contacts are provided by residues 101-102 (RD), 117-118 (ER), 153-154 (SS), and Asp-176.

The protein belongs to the methyltransferase superfamily. RsmJ family.

It is found in the cytoplasm. The enzyme catalyses guanosine(1516) in 16S rRNA + S-adenosyl-L-methionine = N(2)-methylguanosine(1516) in 16S rRNA + S-adenosyl-L-homocysteine + H(+). Its function is as follows. Specifically methylates the guanosine in position 1516 of 16S rRNA. The polypeptide is Ribosomal RNA small subunit methyltransferase J (Vibrio vulnificus (strain YJ016)).